We begin with the raw amino-acid sequence, 235 residues long: Aspartate/glutamate leucyltransferase (235 aa).

Belongs to the R-transferase family. Bpt subfamily.

It localises to the cytoplasm. It catalyses the reaction N-terminal L-glutamyl-[protein] + L-leucyl-tRNA(Leu) = N-terminal L-leucyl-L-glutamyl-[protein] + tRNA(Leu) + H(+). The catalysed reaction is N-terminal L-aspartyl-[protein] + L-leucyl-tRNA(Leu) = N-terminal L-leucyl-L-aspartyl-[protein] + tRNA(Leu) + H(+). Functions in the N-end rule pathway of protein degradation where it conjugates Leu from its aminoacyl-tRNA to the N-termini of proteins containing an N-terminal aspartate or glutamate. This chain is Aspartate/glutamate leucyltransferase, found in Pseudomonas putida (strain GB-1).